The following is a 497-amino-acid chain: MQPYTTVKDEAHVKALTHVPRNKDENGSAFHGVTFLKQLTMDNPNHKNVEIWLNNSFIESNNPNKIDLQSNGWYRYTGEQDLSKVVSILLYINDSLSSSDVAKMNLVYGTHKNGFGDQYVSKTVVNTSVDYKLSPISNQVRYTIVANANIGLRKIRIDTAPAESGLPVTVRLDKDIVYEDSSKDEITVNLYDKADNRLVGSKVYTIGELPEEIKFKVDRKFLKKKSKRNYEVRFEKINKESIFVAEGKNKVDTDGYTSSEETVKANSKESTELKYKGVIMTEREVGKEMEVFHETLTIPLKQLPKQKTGYGFELKTEASYNNELAVPYDIKVGALIDKKLIDSHLNYEQKEGNTYVPLEETNKNISSDKRNNDFTFELPHVNVEQKTGALFTDQQVKDKDSRIKNALKDGKRKLYAPIWADLGDYNIFVKSELPIGANKVNFEVTQPLHVYAFMYGTIGSDTLKDDEILVEPVDPRNPFSNGKPSGWSDEDVAWLKR.

Residues 474–497 (DPRNPFSNGKPSGWSDEDVAWLKR) are disordered. Positions 488-497 (SDEDVAWLKR) are enriched in acidic residues.

This is an uncharacterized protein from Bacillus anthracis.